The sequence spans 196 residues: Small heat shock protein C3 (196 aa).

The sHSP domain occupies 88–196 (SAYSSSAIRT…EKDAKEIPIQ (109 aa)).

It belongs to the small heat shock protein (HSP20) family.

The sequence is that of Small heat shock protein C3 (hspc3-1) from Rickettsia felis (strain ATCC VR-1525 / URRWXCal2) (Rickettsia azadi).